The sequence spans 327 residues: DNA-directed RNA polymerase subunit alpha (327 aa).

The interval 1-233 (MQNSASEFLK…DQLSIFADLQ (233 aa)) is alpha N-terminal domain (alpha-NTD). An alpha C-terminal domain (alpha-CTD) region spans residues 247–327 (VDPILLRPVD…NWPPAGLEKP (81 aa)).

This sequence belongs to the RNA polymerase alpha chain family. In terms of assembly, homodimer. The RNAP catalytic core consists of 2 alpha, 1 beta, 1 beta' and 1 omega subunit. When a sigma factor is associated with the core the holoenzyme is formed, which can initiate transcription.

It catalyses the reaction RNA(n) + a ribonucleoside 5'-triphosphate = RNA(n+1) + diphosphate. Functionally, DNA-dependent RNA polymerase catalyzes the transcription of DNA into RNA using the four ribonucleoside triphosphates as substrates. In Laribacter hongkongensis (strain HLHK9), this protein is DNA-directed RNA polymerase subunit alpha.